A 544-amino-acid polypeptide reads, in one-letter code: MGPGARLAALLAVLALGTGDPERAAARGDTFSALTSVARALAPERRLLGLLRRYLRGEEARLRDLTRFYDKVLSLHEDSTTPVANPLLAFTLIKRLQSDWRNVVHSLEASENIRALKDGYEKVEQDLPAFEDLEGAARALMRLQDVYMLNVKGLARGVFQRVTGSAITDLYSPKRLFSLTGDDCFQVGKVAYDMGDYYHAIPWLEEAVSLFRGSYGEWKTEDEASLEDALDHLAFAYFRAGNVSCALSLSREFLLYSPDNKRMARNVLKYERLLAESPNHVVAEAVIQRPNIPHLQTRDTYEGLCQTLGSQPTLYQIPSLYCSYETNSNAYLLLQPIRKEVIHLEPYIALYHDFVSDSEAQKIRELAEPWLQRSVVASGEKQLQVEYRISKSAWLKDTVDPKLVTLNHRIAALTGLDVRPPYAEYLQVVNYGIGGHYEPHFDHATSPSSPLYRMKSGNRVATFMIYLSSVEAGGATAFIYANLSVPVVRNAALFWWNLHRSGEGDSDTLHAGCPVLVGDKWVANKWIHEYGQEFRRPCSSSPED.

The N-terminal stretch at 1–19 (MGPGARLAALLAVLALGTG) is a signal peptide. Positions 107 to 131 (LEASENIRALKDGYEKVEQDLPAFE) form a coiled coil. One copy of the TPR repeat lies at 227–260 (EDALDHLAFAYFRAGNVSCALSLSREFLLYSPDN). An N-linked (GlcNAc...) asparagine glycan is attached at Asn-242. In terms of domain architecture, Fe2OG dioxygenase spans 422-529 (YAEYLQVVNY…KWVANKWIHE (108 aa)). 2 residues coordinate Fe cation: His-440 and Asp-442. Asn-482 carries an N-linked (GlcNAc...) asparagine glycan. His-510 is a binding site for Fe cation. Lys-520 is a 2-oxoglutarate binding site.

It belongs to the P4HA family. Heterotetramer of two alpha-3 chains and two beta chains (the beta chain is the multi-functional PDI). Requires Fe(2+) as cofactor. L-ascorbate is required as a cofactor. Post-translationally, N-glycosylation plays no role in the catalytic activity. Highly expressed in placenta, liver and fetal skin. Weakly expressed in fetal epiphyseal cartilage, fetal liver, fibroblast, lung and skeletal muscle. Expressed also in fibrous cap of carotid atherosclerotic lesions.

It is found in the endoplasmic reticulum lumen. It carries out the reaction L-prolyl-[collagen] + 2-oxoglutarate + O2 = trans-4-hydroxy-L-prolyl-[collagen] + succinate + CO2. In terms of biological role, catalyzes the post-translational formation of 4-hydroxyproline in -Xaa-Pro-Gly- sequences in collagens and other proteins. This chain is Prolyl 4-hydroxylase subunit alpha-3 (P4HA3), found in Homo sapiens (Human).